Consider the following 174-residue polypeptide: Larval cuticle protein A1A (174 aa).

2 repeat units span residues 45–48 and 67–70. Residues 84–150 form the Chitin-binding type R&amp;R domain; the sequence is NPQYSFGYDV…AVVHREPLVA (67 aa). Copy 3 of the repeat occupies 155 to 158; that stretch reads AAPA.

Component of the cuticle of the larva of Tenebrio molitor. This Tenebrio molitor (Yellow mealworm beetle) protein is Larval cuticle protein A1A.